We begin with the raw amino-acid sequence, 624 residues long: Capsid protein p87 (624 aa).

3 disordered regions span residues 183–208, 254–326, and 341–410; these read FADTESAPRTQTADNSPPPVSEQDFD, STPL…TPVS, and TDLP…QKRR. The A-1 repeat unit spans residues 256–268; the sequence is PLQEYQMPPQTPA. The tract at residues 256 to 280 is 2 X 13 AA tandem repeats, motif A; it reads PLQEYQMPPQTPAPLQDQMPPQTPA. One copy of the A-2 repeat lies at 269-280; the sequence is PLQDQMPPQTPA. A compositionally biased stretch (low complexity) spans 279 to 324; the sequence is PAYATPAQQPSQPTPAQTPAQQPSQPTPAYVTSAQTPAQQPSQPTP. One copy of the B-1 repeat lies at 283–293; the sequence is TPAQQPSQPTP. Positions 283 to 324 are 3 X 11 AA repeats, motif B; it reads TPAQQPSQPTPAQTPAQQPSQPTPAYVTSAQTPAQQPSQPTP. One copy of the B-2 repeat lies at 296-306; the sequence is TPAQQPSQPTP. A B-3 repeat occupies 314 to 324; the sequence is TPAQQPSQPTP.

It localises to the virion. This Orgyia pseudotsugata multicapsid polyhedrosis virus (OpMNPV) protein is Capsid protein p87 (P87).